Consider the following 932-residue polypeptide: Protein translocase subunit SecA, chloroplastic (932 aa).

95–102 (MRTGEGKT) lines the ATP pocket. The span at 632 to 641 (HESRRVDNQL) shows a compositional bias: basic and acidic residues. A disordered region spans residues 632–653 (HESRRVDNQLRGRSGRQGDPGS).

The protein belongs to the SecA family.

The protein localises to the plastid. It localises to the chloroplast stroma. The protein resides in the chloroplast thylakoid membrane. It carries out the reaction ATP + H2O + chloroplast-proteinSide 1 = ADP + phosphate + chloroplast-proteinSide 2.. In terms of biological role, has a central role in coupling the hydrolysis of ATP to the transfer of proteins across the thylakoid membrane. The protein is Protein translocase subunit SecA, chloroplastic of Ostreococcus lucimarinus (strain CCE9901).